The chain runs to 444 residues: D(2) dopamine receptor (444 aa).

At 1–37 (MDPLNLSWYDDDPESRNWSRPFNGSEGKADRPPYNYY) the chain is on the extracellular side. N-linked (GlcNAc...) asparagine glycans are attached at residues Asn5, Asn17, and Asn23. Residues 38 to 60 (AMLLTLLIFVIVFGNVLVCMAVS) form a helical membrane-spanning segment. The Cytoplasmic portion of the chain corresponds to 61-70 (REKALQTTTN). The chain crosses the membrane as a helical span at residues 71–93 (YLIVSLAVADLLVATLVMPWVVY). Residues 94–108 (LEVVGEWKFSRIHCD) lie on the Extracellular side of the membrane. Cys107 and Cys182 form a disulfide bridge. A helical membrane pass occupies residues 109 to 130 (IFVTLDVMMCTASILNLCAISI). The Cytoplasmic portion of the chain corresponds to 131 to 151 (DRYTAVAMPMLYNTRYSSKRR). The helical transmembrane segment at 152–172 (VTVMIAIVWVLSFTISCPMLF) threads the bilayer. At 173 to 188 (GLNNTDQNECIIANPA) the chain is on the extracellular side. The helical transmembrane segment at 189–213 (FVVYSSIVSFYVPFIVTLLVYIKIY) threads the bilayer. An interaction with PPP1R9B region spans residues 211 to 374 (KIYIVLRRRR…SQQKEKKATQ (164 aa)). Residues 214 to 374 (IVLRRRRKRV…SQQKEKKATQ (161 aa)) lie on the Cytoplasmic side of the membrane. The tract at residues 281-332 (MEMLSSTSPPERTRYSPIPPSHHQLTLPDPSHHGLHSTPDSPAKPEKNGHAK) is disordered. Residues 375-396 (MLAIVLGVFIICWLPFFITHIL) traverse the membrane as a helical segment. The Extracellular portion of the chain corresponds to 397–410 (NIHCDCNIPPVLYS). Cys400 and Cys402 form a disulfide bridge. A helical transmembrane segment spans residues 411-432 (AFTWLGYVNSAVNPIIYTTFNI). Residues 433–444 (EFRKAFLKILHC) are Cytoplasmic-facing. Cys444 is lipidated: S-palmitoyl cysteine.

The protein belongs to the G-protein coupled receptor 1 family. As to quaternary structure, forms homo- and heterooligomers with DRD4. The interaction with DRD4 may modulate agonist-induced downstream signaling. Interacts with CADPS and CADPS2. Interacts with GPRASP1, PPP1R9B and CLIC6. Interacts with ARRB2. Interacts with HTR2A. Interacts with DRD1. Interacts with KCNA2. Palmitoylated. Palmitoylation which is required for proper localization to the plasma membrane and stability of the receptor could be carried on by ZDHHC4, ZDHHC3 and ZDHHC8.

It localises to the cell membrane. Its subcellular location is the golgi apparatus membrane. Its function is as follows. Dopamine receptor whose activity is mediated by G proteins which inhibit adenylyl cyclase. Positively regulates postnatal regression of retinal hyaloid vessels via suppression of VEGFR2/KDR activity, downstream of OPN5. This is D(2) dopamine receptor (DRD2) from Bos taurus (Bovine).